A 333-amino-acid polypeptide reads, in one-letter code: DNA-directed RNA polymerase subunit alpha (333 aa).

The tract at residues 1-234 (MQISVNEFLT…QQLAAFVDLK (234 aa)) is alpha N-terminal domain (alpha-NTD). An alpha C-terminal domain (alpha-CTD) region spans residues 248–333 (IDPILLRPVD…SLKKDDKATA (86 aa)).

Belongs to the RNA polymerase alpha chain family. As to quaternary structure, homodimer. The RNAP catalytic core consists of 2 alpha, 1 beta, 1 beta' and 1 omega subunit. When a sigma factor is associated with the core the holoenzyme is formed, which can initiate transcription.

It catalyses the reaction RNA(n) + a ribonucleoside 5'-triphosphate = RNA(n+1) + diphosphate. Its function is as follows. DNA-dependent RNA polymerase catalyzes the transcription of DNA into RNA using the four ribonucleoside triphosphates as substrates. In Pseudomonas syringae pv. tomato (strain ATCC BAA-871 / DC3000), this protein is DNA-directed RNA polymerase subunit alpha.